The primary structure comprises 143 residues: Putative complexin-1 (143 aa).

Positions 15–71 (NEVTGGLGLKDDGGEKTETGEDPEVVAARLEQEERRKEKHRKMEQEREKMRQGIRDK) are disordered. Basic and acidic residues-rich tracts occupy residues 23–33 (LKDDGGEKTET) and 44–71 (LEQEERRKEKHRKMEQEREKMRQGIRDK). Residues 40-71 (VAARLEQEERRKEKHRKMEQEREKMRQGIRDK) adopt a coiled-coil conformation.

This sequence belongs to the complexin/synaphin family.

The protein localises to the cytoplasm. Its subcellular location is the cytosol. Functionally, positively regulates a late step in synaptic vesicle exocytosis. This chain is Putative complexin-1 (cpx-1), found in Caenorhabditis briggsae.